We begin with the raw amino-acid sequence, 434 residues long: Nicotinate phosphoribosyltransferase (434 aa).

At H242 the chain carries Phosphohistidine; by autocatalysis.

The protein belongs to the NAPRTase family. In terms of processing, transiently phosphorylated on a His residue during the reaction cycle. Phosphorylation strongly increases the affinity for substrates and increases the rate of nicotinate D-ribonucleotide production. Dephosphorylation regenerates the low-affinity form of the enzyme, leading to product release.

The catalysed reaction is nicotinate + 5-phospho-alpha-D-ribose 1-diphosphate + ATP + H2O = nicotinate beta-D-ribonucleotide + ADP + phosphate + diphosphate. The protein operates within cofactor biosynthesis; NAD(+) biosynthesis; nicotinate D-ribonucleotide from nicotinate: step 1/1. Catalyzes the synthesis of beta-nicotinate D-ribonucleotide from nicotinate and 5-phospho-D-ribose 1-phosphate at the expense of ATP. The sequence is that of Nicotinate phosphoribosyltransferase from Brucella canis (strain ATCC 23365 / NCTC 10854 / RM-666).